The sequence spans 100 residues: Urease subunit gamma (100 aa).

The protein belongs to the urease gamma subunit family. As to quaternary structure, heterotrimer of UreA (gamma), UreB (beta) and UreC (alpha) subunits. Three heterotrimers associate to form the active enzyme.

Its subcellular location is the cytoplasm. The enzyme catalyses urea + 2 H2O + H(+) = hydrogencarbonate + 2 NH4(+). Its pathway is nitrogen metabolism; urea degradation; CO(2) and NH(3) from urea (urease route): step 1/1. The chain is Urease subunit gamma from Staphylococcus epidermidis (strain ATCC 35984 / DSM 28319 / BCRC 17069 / CCUG 31568 / BM 3577 / RP62A).